Here is a 150-residue protein sequence, read N- to C-terminus: Aspartate carbamoyltransferase regulatory chain (150 aa).

Zn(2+) is bound by residues Cys-105, Cys-110, Cys-133, and Cys-136.

The protein belongs to the PyrI family. As to quaternary structure, contains catalytic and regulatory chains. Zn(2+) is required as a cofactor.

Its function is as follows. Involved in allosteric regulation of aspartate carbamoyltransferase. The polypeptide is Aspartate carbamoyltransferase regulatory chain (Thermococcus sibiricus (strain DSM 12597 / MM 739)).